The primary structure comprises 402 residues: Putative cytochrome P450 123 (402 aa).

Cysteine 350 contributes to the heme binding site.

This sequence belongs to the cytochrome P450 family. The cofactor is heme.

This Mycobacterium bovis (strain ATCC BAA-935 / AF2122/97) protein is Putative cytochrome P450 123 (cyp123).